A 223-amino-acid polypeptide reads, in one-letter code: Cytidylate kinase (223 aa).

12–20 (GPAGSGKST) is an ATP binding site.

The protein belongs to the cytidylate kinase family. Type 1 subfamily.

Its subcellular location is the cytoplasm. It carries out the reaction CMP + ATP = CDP + ADP. The catalysed reaction is dCMP + ATP = dCDP + ADP. The sequence is that of Cytidylate kinase from Onion yellows phytoplasma (strain OY-M).